The chain runs to 311 residues: Protoheme IX farnesyltransferase (311 aa).

The next 9 membrane-spanning stretches (helical) occupy residues 33-53 (VVMLMLLTSLIGMLLATPSPA), 55-75 (LWLLVLGNLGIGLCAGAAAAV), 104-124 (NALLFSALLGGVGLWILSSFI), 127-147 (LTAWLTLASLLGYAVIYTLFL), 155-175 (IVIGGLAGAAPPLLGWTAVTG), 181-201 (GLLLVLIIFAWTPPHFWALAL), 228-248 (IVLYTVILIAVTLLPFATRMM), 252-272 (YLVGALVLGAGFLYRALKLLV), and 287-307 (IIYLMALFVVMLVDHYLFPIP).

This sequence belongs to the UbiA prenyltransferase family. Protoheme IX farnesyltransferase subfamily.

It localises to the cell inner membrane. The enzyme catalyses heme b + (2E,6E)-farnesyl diphosphate + H2O = Fe(II)-heme o + diphosphate. It participates in porphyrin-containing compound metabolism; heme O biosynthesis; heme O from protoheme: step 1/1. In terms of biological role, converts heme B (protoheme IX) to heme O by substitution of the vinyl group on carbon 2 of heme B porphyrin ring with a hydroxyethyl farnesyl side group. This Teredinibacter turnerae (strain ATCC 39867 / T7901) protein is Protoheme IX farnesyltransferase.